A 242-amino-acid chain; its full sequence is ATP synthase subunit b (242 aa).

The next 2 helical transmembrane spans lie at 8–28 and 87–107; these read VLPF…ASAP and LMDL…LIKF.

This sequence belongs to the ATPase B chain family. In terms of assembly, F-type ATPases have 2 components, F(1) - the catalytic core - and F(0) - the membrane proton channel. F(1) has five subunits: alpha(3), beta(3), gamma(1), delta(1), epsilon(1). F(0) has three main subunits: a(1), b(2) and c(10-14). The alpha and beta chains form an alternating ring which encloses part of the gamma chain. F(1) is attached to F(0) by a central stalk formed by the gamma and epsilon chains, while a peripheral stalk is formed by the delta and b chains.

The protein localises to the cell inner membrane. F(1)F(0) ATP synthase produces ATP from ADP in the presence of a proton or sodium gradient. F-type ATPases consist of two structural domains, F(1) containing the extramembraneous catalytic core and F(0) containing the membrane proton channel, linked together by a central stalk and a peripheral stalk. During catalysis, ATP synthesis in the catalytic domain of F(1) is coupled via a rotary mechanism of the central stalk subunits to proton translocation. In terms of biological role, component of the F(0) channel, it forms part of the peripheral stalk, linking F(1) to F(0). This is ATP synthase subunit b from Desulfotalea psychrophila (strain LSv54 / DSM 12343).